A 266-amino-acid polypeptide reads, in one-letter code: Putative carbamate hydrolase RutD (266 aa).

This sequence belongs to the AB hydrolase superfamily. Hydrolase RutD family.

It carries out the reaction carbamate + 2 H(+) = NH4(+) + CO2. In terms of biological role, involved in pyrimidine catabolism. May facilitate the hydrolysis of carbamate, a reaction that can also occur spontaneously. In Escherichia coli O139:H28 (strain E24377A / ETEC), this protein is Putative carbamate hydrolase RutD.